A 326-amino-acid polypeptide reads, in one-letter code: Beta-ketoacyl-[acyl-carrier-protein] synthase III (326 aa).

Residues Cys120 and His253 contribute to the active site. Residues 254–258 (QANIR) form an ACP-binding region. Asn283 is a catalytic residue.

It belongs to the thiolase-like superfamily. FabH family. As to quaternary structure, homodimer.

It localises to the cytoplasm. It catalyses the reaction malonyl-[ACP] + acetyl-CoA + H(+) = 3-oxobutanoyl-[ACP] + CO2 + CoA. Its pathway is lipid metabolism; fatty acid biosynthesis. In terms of biological role, catalyzes the condensation reaction of fatty acid synthesis by the addition to an acyl acceptor of two carbons from malonyl-ACP. Catalyzes the first condensation reaction which initiates fatty acid synthesis and may therefore play a role in governing the total rate of fatty acid production. Possesses both acetoacetyl-ACP synthase and acetyl transacylase activities. Its substrate specificity determines the biosynthesis of branched-chain and/or straight-chain of fatty acids. The protein is Beta-ketoacyl-[acyl-carrier-protein] synthase III of Cupriavidus pinatubonensis (strain JMP 134 / LMG 1197) (Cupriavidus necator (strain JMP 134)).